Here is a 581-residue protein sequence, read N- to C-terminus: Proline--tRNA ligase (581 aa).

This sequence belongs to the class-II aminoacyl-tRNA synthetase family. ProS type 1 subfamily. As to quaternary structure, homodimer.

It localises to the cytoplasm. The catalysed reaction is tRNA(Pro) + L-proline + ATP = L-prolyl-tRNA(Pro) + AMP + diphosphate. Its function is as follows. Catalyzes the attachment of proline to tRNA(Pro) in a two-step reaction: proline is first activated by ATP to form Pro-AMP and then transferred to the acceptor end of tRNA(Pro). As ProRS can inadvertently accommodate and process non-cognate amino acids such as alanine and cysteine, to avoid such errors it has two additional distinct editing activities against alanine. One activity is designated as 'pretransfer' editing and involves the tRNA(Pro)-independent hydrolysis of activated Ala-AMP. The other activity is designated 'posttransfer' editing and involves deacylation of mischarged Ala-tRNA(Pro). The misacylated Cys-tRNA(Pro) is not edited by ProRS. This is Proline--tRNA ligase from Delftia acidovorans (strain DSM 14801 / SPH-1).